The sequence spans 430 residues: Serine--tRNA ligase (430 aa).

The disordered stretch occupies residues 41-60; that stretch reads QSRTQDLQNERNVRSKSIGK. 236–238 is a binding site for L-serine; it reads TAE. 267–269 contributes to the ATP binding site; the sequence is RSE. Glutamate 290 is a binding site for L-serine. 354–357 serves as a coordination point for ATP; the sequence is EISS. An L-serine-binding site is contributed by serine 390.

The protein belongs to the class-II aminoacyl-tRNA synthetase family. Type-1 seryl-tRNA synthetase subfamily. As to quaternary structure, homodimer. The tRNA molecule binds across the dimer.

The protein localises to the cytoplasm. It carries out the reaction tRNA(Ser) + L-serine + ATP = L-seryl-tRNA(Ser) + AMP + diphosphate + H(+). It catalyses the reaction tRNA(Sec) + L-serine + ATP = L-seryl-tRNA(Sec) + AMP + diphosphate + H(+). The protein operates within aminoacyl-tRNA biosynthesis; selenocysteinyl-tRNA(Sec) biosynthesis; L-seryl-tRNA(Sec) from L-serine and tRNA(Sec): step 1/1. In terms of biological role, catalyzes the attachment of serine to tRNA(Ser). Is also able to aminoacylate tRNA(Sec) with serine, to form the misacylated tRNA L-seryl-tRNA(Sec), which will be further converted into selenocysteinyl-tRNA(Sec). This is Serine--tRNA ligase from Alteromonas mediterranea (strain DSM 17117 / CIP 110805 / LMG 28347 / Deep ecotype).